The sequence spans 361 residues: Holliday junction branch migration complex subunit RuvB (361 aa).

The segment at 1–181 is large ATPase domain (RuvB-L); that stretch reads MKDQRLLDSV…FGIPIRLNFY (181 aa). Residues L20, R21, G62, K65, T66, T67, 128–130, R171, Y181, and R218 each bind ATP; that span reads EDY. T66 is a binding site for Mg(2+). The tract at residues 182–252 is small ATPAse domain (RuvB-S); the sequence is TIEELEYIVQ…VADEALSRLE (71 aa). The interval 255–361 is head domain (RuvB-H); the sequence is HLGLDPLDRR…QTTLWDEADE (107 aa). The DNA site is built by R291, R310, and R315.

The protein belongs to the RuvB family. In terms of assembly, homohexamer. Forms an RuvA(8)-RuvB(12)-Holliday junction (HJ) complex. HJ DNA is sandwiched between 2 RuvA tetramers; dsDNA enters through RuvA and exits via RuvB. An RuvB hexamer assembles on each DNA strand where it exits the tetramer. Each RuvB hexamer is contacted by two RuvA subunits (via domain III) on 2 adjacent RuvB subunits; this complex drives branch migration. In the full resolvosome a probable DNA-RuvA(4)-RuvB(12)-RuvC(2) complex forms which resolves the HJ.

Its subcellular location is the cytoplasm. The catalysed reaction is ATP + H2O = ADP + phosphate + H(+). The RuvA-RuvB-RuvC complex processes Holliday junction (HJ) DNA during genetic recombination and DNA repair, while the RuvA-RuvB complex plays an important role in the rescue of blocked DNA replication forks via replication fork reversal (RFR). RuvA specifically binds to HJ cruciform DNA, conferring on it an open structure. The RuvB hexamer acts as an ATP-dependent pump, pulling dsDNA into and through the RuvAB complex. RuvB forms 2 homohexamers on either side of HJ DNA bound by 1 or 2 RuvA tetramers; 4 subunits per hexamer contact DNA at a time. Coordinated motions by a converter formed by DNA-disengaged RuvB subunits stimulates ATP hydrolysis and nucleotide exchange. Immobilization of the converter enables RuvB to convert the ATP-contained energy into a lever motion, pulling 2 nucleotides of DNA out of the RuvA tetramer per ATP hydrolyzed, thus driving DNA branch migration. The RuvB motors rotate together with the DNA substrate, which together with the progressing nucleotide cycle form the mechanistic basis for DNA recombination by continuous HJ branch migration. Branch migration allows RuvC to scan DNA until it finds its consensus sequence, where it cleaves and resolves cruciform DNA. The sequence is that of Holliday junction branch migration complex subunit RuvB from Bartonella quintana (strain Toulouse) (Rochalimaea quintana).